Consider the following 709-residue polypeptide: ATP-dependent RNA helicase dbp7 (709 aa).

Residues 13–90 (DNAQSRKPEA…KPAHELKGNK (78 aa)) form a disordered region. A compositionally biased stretch (basic and acidic residues) spans 16–34 (QSRKPEALKSSRRWTDRAR). Residues 44-65 (NESSKSTVKRNSGTNGASTDYK) are compositionally biased toward polar residues. Basic and acidic residues predominate over residues 66 to 90 (NSQKEKVINPVFDPRKPAHELKGNK). Positions 138–167 (TNFAGVQLDTQLADHLNNKMNISAPTAIQS) match the Q motif motif. The region spanning 172 to 366 (ALLNTDDKDA…DSALKDALYL (195 aa)) is the Helicase ATP-binding domain. 185-192 (AQTGSGKT) provides a ligand contact to ATP. The short motif at 301-304 (DEGD) is the DEAD box element. Positions 404–580 (LLRSHVRSYK…EQPNGPSGLL (177 aa)) constitute a Helicase C-terminal domain. The interval 662 to 690 (GKISGANSSKPRKQGGSVDKGKSKSSKDI) is disordered.

Belongs to the DEAD box helicase family. DDX31/DBP7 subfamily.

It localises to the nucleus. It is found in the nucleolus. The enzyme catalyses ATP + H2O = ADP + phosphate + H(+). ATP-binding RNA helicase involved in the biogenesis of 60S ribosomal subunits and is required for the normal formation of 25S and 5.8S rRNAs. The sequence is that of ATP-dependent RNA helicase dbp7 (dbp7) from Schizosaccharomyces pombe (strain 972 / ATCC 24843) (Fission yeast).